A 148-amino-acid chain; its full sequence is Meiosis inducing protein mei3 (148 aa).

Over residues Met-1–Pro-20 the composition is skewed to polar residues. Residues Met-1–Glu-96 form a disordered region. The span at Asn-21–Lys-46 shows a compositional bias: low complexity. Basic residues predominate over residues Pro-75–Pro-86.

Functionally, acts as a critical meiotic inducer by binding non-covalently to protein kinase ran1/pat1 inhibiting its enzymatic activity. Inhibits ran1/pat1 by acting as a pseudosubstrate for ran1/pat1 instead of its natural substrate ste11. Inactivation of the ran1/pat1 protein kinase is both necessary and sufficient to divert a vegetative cell from mitotic division to meiotic differentiation. The sequence is that of Meiosis inducing protein mei3 from Schizosaccharomyces pombe (strain 972 / ATCC 24843) (Fission yeast).